Reading from the N-terminus, the 366-residue chain is MFSRLPTSLARNVARRAPTSFVRPSAAAAALRFSSTKTMTVREALNSAMAEELDRDDDVFLIGEEVAQYNGAYKVSKGLLDRFGERRVVDTPITEYGFTGLAVGAALKGLKPIVEFMSFNFSMQAIDHVVNSAAKTHYMSGGTQKCQMVFRGPNGAAVGVGAQHSQDFSPWYGSIPGLKVLVPYSAEDARGLLKAAIRDPNPVVFLENELLYGESFEISEEALSPEFTLPYKAKIEREGTDISIVTYTRNVQFSLEAAEILQKKYGVSAEVINLRSIRPLDTEAIIKTVKKTNHLITVESTFPSFGVGAEIVAQVMESEAFDYLDAPIQRVTGADVPTPYAKELEDFAFPDTPTIVKAVKEVLSIE.

A mitochondrion-targeting transit peptide spans 1–33 (MFSRLPTSLARNVARRAPTSFVRPSAAAAALRF). Residue Glu95 participates in thiamine diphosphate binding. K(+) is bound by residues Ala196, Ile197, Asp199, and Asn201.

As to quaternary structure, pyruvate dehydrogenase (E1) is a tetramer of 2 alpha and 2 beta subunits. Eukaryotic pyruvate dehydrogenase (PDH) complexes are organized as a core consisting of the oligomeric dihydrolipoamide acetyl-transferase (E2), around which are arranged multiple copies of pyruvate dehydrogenase (E1), dihydrolipoamide dehydrogenase (E3) and protein X (E3BP) bound by non-covalent bonds. The cofactor is thiamine diphosphate.

It localises to the mitochondrion matrix. The catalysed reaction is N(6)-[(R)-lipoyl]-L-lysyl-[protein] + pyruvate + H(+) = N(6)-[(R)-S(8)-acetyldihydrolipoyl]-L-lysyl-[protein] + CO2. In terms of biological role, the pyruvate dehydrogenase complex catalyzes the overall conversion of pyruvate to acetyl-CoA and CO(2). This is Pyruvate dehydrogenase E1 component subunit beta, mitochondrial (PDB1) from Saccharomyces cerevisiae (strain ATCC 204508 / S288c) (Baker's yeast).